The chain runs to 42 residues: uncharacterized protein (42 aa).

This is an uncharacterized protein from Escherichia coli (Bacteriophage T4).